Reading from the N-terminus, the 274-residue chain is MPSYAVLGATGNTGRAIVQVLLDRADTDTRIHICAYCRSKEKLFRVCPAAETSKSLSVFQGRLDDDSLIDECLRGTDAVFLVVAIVDNMPGCTVAMQTAEAVVASLQRLRATDPAIRLPRLVILSSASLEPTFCNDVPAPVHWVLKTAVSHLYRDLAAAEAYLRAQSDWLSATFVKPGGLVHDQARGHKVCLDRAQTPLSFLDLAAGMVEVADADDGRYHMRSVSVVPASRVAIFPWDGVYYTFTGLLFHFCPWTYRFLGEYKLQSRKERDKQA.

This sequence belongs to the avfA family.

Its pathway is mycotoxin biosynthesis; sterigmatocystin biosynthesis. Its function is as follows. Oxidoreductase; part of the gene cluster that mediates the biosynthesis of sterigmatocystin (ST), a polyketide-derived furanocoumarin which is part of the most toxic and carcinogenic compounds among the known mycotoxins. The first step in the biosynthesis of sterigmatocystin is the production of hexanoate by the fatty acid synthase (FAS) units stcJ and stcK. The polyketide backbone is assembled by the non-reducing polyketide synthase stcA by condensation of the starter hexanoyl-CoA and 7 malonyl-CoA extender units followed by cyclization and release of norsolorinic acid. Norsolorinic acid is the first stable intermediate in the biosynthesis of sterigmatocystin and is converted into averantin (AVN) by the ketoreductase stcE which reduces the hexanoate ketone to an alcohol. Averantin is then oxidized into 5'-hydroxyaverantin (HAVN) by the cytochrome P450 monooxygenase stcF. 5'-hydroxyaverantin is further converted to 5'-oxyaverantin (OAVN) by the 5'-hydroxyaverantin dehydrogenase stcG. The next step is the conversion of OAVN into averufin (AVF) which is catalyzed by a yet to be identified enzyme. The cytochrome P450 monooxygenase stcB and the flavin-binding monooxygenase stcW are both required for the conversion of averufin to 1-hydroxyversicolorone. The esterase stcI probably catalyzes the formation of versiconal hemiacetal acetate from 1-hydroxyversicolorone. The oxydoreductase stcN then probably catalyzes the biosynthetic step from versiconal to versicolorin B (VERB). The next step is performed by the versicolorin B desaturase stcL to produce versicolorin A (VERA). The ketoreductase stcU and the cytochrome P450 monooxygenase stcS are involved in the conversion of versicolorin A to demethylsterigmatocystin. The Baeyer-Villiger oxidas stcQ and the reductase stcR might be involved in the biosynthetic step from versicolorin A to demethylsterigmatocystin. The final step in the biosynthesis of sterigmatocystin is the methylation of demethylsterigmatocystin catalyzed by the methyltransferase stcP. This is Oxidoreductase stcQ from Emericella nidulans (strain FGSC A4 / ATCC 38163 / CBS 112.46 / NRRL 194 / M139) (Aspergillus nidulans).